Here is a 68-residue protein sequence, read N- to C-terminus: Protein transport protein Sec61 gamma-1 subunit (68 aa).

Residues 1-32 (MDKVVKFAEPGRAFAKDSIRLVKRCTKPDRKE) lie on the Cytoplasmic side of the membrane. Residues 33-61 (FQKIAIATAVGFAIMGFIGFFVKLIHIPI) traverse the membrane as a helical segment. The Extracellular segment spans residues 62-68 (NNIIVGS).

This sequence belongs to the SecE/SEC61-gamma family. Heterotrimeric complex composed of SEC61-alpha, SEC61-beta and SEC61-gamma.

The protein resides in the endoplasmic reticulum membrane. In terms of biological role, necessary for protein translocation in the endoplasmic reticulum. This is Protein transport protein Sec61 gamma-1 subunit (SEC61G1) from Drosophila melanogaster (Fruit fly).